We begin with the raw amino-acid sequence, 172 residues long: Phosphopantetheine adenylyltransferase (172 aa).

S9 lines the substrate pocket. ATP-binding positions include S9–F10 and H17. 3 residues coordinate substrate: K41, L78, and R92. ATP contacts are provided by residues G93 to R95, E103, and G128 to T134.

This sequence belongs to the bacterial CoaD family. In terms of assembly, homohexamer. Mg(2+) is required as a cofactor.

It is found in the cytoplasm. It catalyses the reaction (R)-4'-phosphopantetheine + ATP + H(+) = 3'-dephospho-CoA + diphosphate. It participates in cofactor biosynthesis; coenzyme A biosynthesis; CoA from (R)-pantothenate: step 4/5. Its function is as follows. Reversibly transfers an adenylyl group from ATP to 4'-phosphopantetheine, yielding dephospho-CoA (dPCoA) and pyrophosphate. The sequence is that of Phosphopantetheine adenylyltransferase from Bartonella quintana (strain Toulouse) (Rochalimaea quintana).